The following is a 442-amino-acid chain: 4-alpha-glucanotransferase (442 aa).

Aspartate 13, asparagine 15, aspartate 17, valine 19, and aspartate 21 together coordinate Ca(2+). Aspartate 186 (nucleophile) is an active-site residue. The active-site Proton donor is the glutamate 216.

This sequence belongs to the glycosyl hydrolase 13 family. Monomer. Ca(2+) is required as a cofactor.

Its subcellular location is the cytoplasm. The catalysed reaction is Transfers a segment of a (1-&gt;4)-alpha-D-glucan to a new position in an acceptor, which may be glucose or a (1-&gt;4)-alpha-D-glucan.. Its function is as follows. Hydrolyzes the 1,4-alpha-glycoside bonds in oligomeric and polymeric 1,4-alpha-glucans and transfers oligosaccharides (maltotriose being the shortest one) to acceptor maltodextrins. The polypeptide is 4-alpha-glucanotransferase (mgtA) (Thermotoga neapolitana).